The chain runs to 230 residues: Sugar fermentation stimulation protein homolog (230 aa).

This sequence belongs to the SfsA family.

In Pelobacter propionicus (strain DSM 2379 / NBRC 103807 / OttBd1), this protein is Sugar fermentation stimulation protein homolog.